We begin with the raw amino-acid sequence, 378 residues long: mRNA cap guanine-N(7) methyltransferase (378 aa).

The region spanning 24–331 is the mRNA cap 0 methyltransferase domain; that stretch reads SRIFFMRNMN…MYLVFGFRKK (308 aa). 33-34 serves as a coordination point for mRNA; that stretch reads NN. Residues Lys37, Ala62, Asp84, Asp116, Gln138, and Tyr143 each contribute to the S-adenosyl-L-methionine site. Basic and acidic residues-rich tracts occupy residues 335–347 and 356–378; these read EKNLESEAPEIKK and DTDKTAEKNEERIEEKEENPSHC. A disordered region spans residues 335–378; sequence EKNLESEAPEIKKVTPVPLNEDTDKTAEKNEERIEEKEENPSHC.

The protein belongs to the class I-like SAM-binding methyltransferase superfamily. mRNA cap 0 methyltransferase family.

The protein resides in the nucleus. It catalyses the reaction a 5'-end (5'-triphosphoguanosine)-ribonucleoside in mRNA + S-adenosyl-L-methionine = a 5'-end (N(7)-methyl 5'-triphosphoguanosine)-ribonucleoside in mRNA + S-adenosyl-L-homocysteine. In terms of biological role, mRNA-capping methyltransferase that methylates the N7 position of the added guanosine to the 5'-cap structure of mRNAs. Binds RNA containing 5'-terminal GpppC. This chain is mRNA cap guanine-N(7) methyltransferase, found in Caenorhabditis briggsae.